The primary structure comprises 793 residues: Probable serine/threonine-protein kinase fnkA (793 aa).

Residues 11–358 form the Protein kinase domain; sequence WEILSQLGTG…IINLISHNFI (348 aa). ATP is bound by residues 17–25 and Lys46; that span reads LGTGAFGRV. Asp138 functions as the Proton acceptor in the catalytic mechanism. 5 FNIP repeats span residues 403 to 444, 470 to 514, 515 to 557, 558 to 601, and 691 to 733; these read FNQT…FGAR, YNQP…ILGD, YDQK…LGYR, FNKA…LGYC, and FIRP…LGSR.

The protein belongs to the protein kinase superfamily. STE Ser/Thr protein kinase family. The cofactor is Mg(2+).

It carries out the reaction L-seryl-[protein] + ATP = O-phospho-L-seryl-[protein] + ADP + H(+). The catalysed reaction is L-threonyl-[protein] + ATP = O-phospho-L-threonyl-[protein] + ADP + H(+). The sequence is that of Probable serine/threonine-protein kinase fnkA from Dictyostelium discoideum (Social amoeba).